A 207-amino-acid chain; its full sequence is Putative acetyltransferase C18B11.09c (207 aa).

The protein belongs to the transferase hexapeptide repeat family.

This chain is Putative acetyltransferase C18B11.09c, found in Schizosaccharomyces pombe (strain 972 / ATCC 24843) (Fission yeast).